Consider the following 232-residue polypeptide: Membrane steroid-binding protein 1 (232 aa).

The helical transmembrane segment at 25–45 threads the bilayer; the sequence is AAFFTAVAAAAALYHVVSGIF. 2 disordered regions span residues 48-77 and 172-232; these read PPPP…VSEE and TVPV…AKES. A Cytochrome b5 heme-binding domain is found at 71-170; that stretch reads LGEVSEEELR…GKYVKVGTVK (100 aa). The tract at residues 73 to 170 is steroid-binding; it reads EVSEEELRQY…GKYVKVGTVK (98 aa). Residues 179–193 are compositionally biased toward low complexity; sequence APSTSPETTETAAAA. The segment covering 194-219 has biased composition (basic and acidic residues); sequence EPEKAPATEEKPREVSSEEVKEKEDA.

This sequence belongs to the cytochrome b5 family. MAPR subfamily. In terms of assembly, interacts with SERL2. In terms of tissue distribution, expressed in leaf sheaths, leaf blades and panicles.

Its subcellular location is the cell membrane. In terms of biological role, binds multiple steroid compounds. May act as a coreceptor with SERL2 and enhance its endocytosis. The chain is Membrane steroid-binding protein 1 from Oryza sativa subsp. japonica (Rice).